Consider the following 1013-residue polypeptide: GTPase-activating Rap/Ran-GAP domain-like protein 3 (1013 aa).

The residue at position 45 (S45) is a Phosphoserine. The region spanning 191–407 is the Rap-GAP domain; it reads LLVLEEQEGS…RTLDMLIRSL (217 aa). Residues S426 and S432 each carry the phosphoserine modification. The CNH domain maps to 489-800; it reads PHEAVCADPW…QLVASRSDIY (312 aa). 2 disordered regions span residues 810-842 and 913-1013; these read VSSG…SLGE and LLGL…IDLK. The span at 811–821 shows a compositional bias: low complexity; that stretch reads SSGGSSKGASA. A Phosphothreonine modification is found at T827. A compositionally biased stretch (low complexity) spans 952-962; that stretch reads SSSSDRIPSGS. 2 stretches are compositionally biased toward polar residues: residues 963-982 and 993-1003; these read LESA…SSDQ and VSGSSPFQLTA.

Belongs to the GARNL3 family.

This chain is GTPase-activating Rap/Ran-GAP domain-like protein 3 (GARNL3), found in Homo sapiens (Human).